The following is a 347-amino-acid chain: Zinc finger protein CONSTANS-LIKE 2 (347 aa).

Cys-16, Cys-19, Cys-39, His-44, Cys-59, Cys-62, Cys-82, and His-87 together coordinate Zn(2+). The B box-type 1; atypical zinc-finger motif lies at 16–58; sequence CDTCRSAACTVYCEADSAYLCTTCDARVHAANRVASRHERVRV. The B box-type 2; atypical zinc-finger motif lies at 59–101; that stretch reads CQSCESAPAAFLCKADAASLCTACDAEIHSANPLARRHQRVPI. In terms of domain architecture, CCT spans 278–320; that stretch reads REARVLRYREKKKTRKFDKTIRYASRKAYAEIRPRIKGRFAKR.

This sequence belongs to the CONSTANS family. As to expression, highly expressed in leaves. Expressed at lower levels in stems, flowers and siliques. Not detected in roots.

It is found in the nucleus. Putative transcription factor. Does not affect flowering time. The protein is Zinc finger protein CONSTANS-LIKE 2 (COL2) of Arabidopsis thaliana (Mouse-ear cress).